We begin with the raw amino-acid sequence, 92 residues long: Small ribosomal subunit protein uS19c (92 aa).

Positions 73–92 (EFSPTRTYRGHAKKDKKAKR) are disordered. Residues 80 to 92 (YRGHAKKDKKAKR) show a composition bias toward basic residues.

The protein belongs to the universal ribosomal protein uS19 family.

It localises to the plastid. The protein resides in the chloroplast. Functionally, protein S19 forms a complex with S13 that binds strongly to the 16S ribosomal RNA. This is Small ribosomal subunit protein uS19c (rps19) from Chlamydomonas reinhardtii (Chlamydomonas smithii).